A 195-amino-acid polypeptide reads, in one-letter code: CASP-like protein 2C2 (195 aa).

Residues 1–18 (MAATTAAAAVPGVVRAER) are Cytoplasmic-facing. The chain crosses the membrane as a helical span at residues 19 to 39 (LLRGGCVVMAATAALLLGFSA). The Extracellular portion of the chain corresponds to 40–57 (ETKTVLFVRKTAVAKDVQ). A helical membrane pass occupies residues 58 to 78 (ALWVLTVAAAAAAGYQFAQLV). Residues 79–106 (RCMYCSSSGDAGAMAVAWTSFLLDKGCA) lie on the Cytoplasmic side of the membrane. A helical membrane pass occupies residues 107-127 (YVVFASTAAALQACMVGLIGV). The Extracellular segment spans residues 128–145 (EALQWSKLCNIYTRFCEQ). The helical transmembrane segment at 146–166 (AAAGMLCSFLAAAGMAVLSAF) threads the bilayer. Topologically, residues 167-195 (SARRLFRLYSPAGHRRSCPRAAVLATSPH) are cytoplasmic.

It belongs to the Casparian strip membrane proteins (CASP) family. Homodimer and heterodimers.

The protein resides in the cell membrane. This chain is CASP-like protein 2C2, found in Oryza sativa subsp. japonica (Rice).